Here is a 620-residue protein sequence, read N- to C-terminus: 1-deoxy-D-xylulose-5-phosphate synthase (620 aa).

Residues histidine 80 and 121-123 each bind thiamine diphosphate; that span reads GHS. Aspartate 152 is a Mg(2+) binding site. Residues 153-154, asparagine 181, tyrosine 288, and glutamate 370 each bind thiamine diphosphate; that span reads GA. Asparagine 181 lines the Mg(2+) pocket.

The protein belongs to the transketolase family. DXPS subfamily. As to quaternary structure, homodimer. The cofactor is Mg(2+). It depends on thiamine diphosphate as a cofactor.

The catalysed reaction is D-glyceraldehyde 3-phosphate + pyruvate + H(+) = 1-deoxy-D-xylulose 5-phosphate + CO2. The protein operates within metabolic intermediate biosynthesis; 1-deoxy-D-xylulose 5-phosphate biosynthesis; 1-deoxy-D-xylulose 5-phosphate from D-glyceraldehyde 3-phosphate and pyruvate: step 1/1. In terms of biological role, catalyzes the acyloin condensation reaction between C atoms 2 and 3 of pyruvate and glyceraldehyde 3-phosphate to yield 1-deoxy-D-xylulose-5-phosphate (DXP). This is 1-deoxy-D-xylulose-5-phosphate synthase from Salmonella paratyphi A (strain ATCC 9150 / SARB42).